The following is a 290-amino-acid chain: Probable protein phosphatase 2C 20 (290 aa).

The PPM-type phosphatase domain maps to Ala-31 to Phe-278. Positions 68, 69, 230, and 269 each coordinate Mn(2+).

Belongs to the PP2C family. It depends on Mg(2+) as a cofactor. The cofactor is Mn(2+).

The catalysed reaction is O-phospho-L-seryl-[protein] + H2O = L-seryl-[protein] + phosphate. It carries out the reaction O-phospho-L-threonyl-[protein] + H2O = L-threonyl-[protein] + phosphate. Its function is as follows. May be involved in defense signaling. This Arabidopsis thaliana (Mouse-ear cress) protein is Probable protein phosphatase 2C 20 (PPC3-1.2).